We begin with the raw amino-acid sequence, 317 residues long: Ubiquinone biosynthesis protein COQ9, mitochondrial (317 aa).

A mitochondrion-targeting transit peptide spans 1-46 (MAASVARVLKAAGGRQLLLMVARRRPVLRQPFLLMPRKFWGTSALR). Residues 45–97 (LRSEDQKQPPFSSTSAHAGTPEHAEEQYQQQQPPPRYTDQAGEESEGYESEEQ) form a disordered region. Positions 85–96 (AGEESEGYESEE) are enriched in acidic residues. R243 contributes to the a 1,2-diacylglycero-3-phosphoethanolamine binding site.

It belongs to the COQ9 family. In terms of assembly, homodimer. Heterodimer; two heterodimers of COQ7:COQ9 come together on the same side of the lipid pseudo-bilayer and form a curved tetramer with a hydrophobic surface suitable for membrane interaction. These two tetramers assemble into a soluble octamer with a pseudo-bilayer of lipids captured within. Interacts with COQ7; this interaction allows ubiquinone (CoQ) isoprene intermediates presentation to COQ7 and facilitates the COQ7-mediated hydroxylase step.

Its subcellular location is the mitochondrion. It participates in cofactor biosynthesis; ubiquinone biosynthesis. In terms of biological role, membrane-associated protein that warps the membrane surface to access and bind aromatic isoprenes with high specificity, including ubiquinone (CoQ) isoprene intermediates and presents them directly to COQ7, therefore facilitating the COQ7-mediated hydroxylase step. Participates in the biosynthesis of coenzyme Q, also named ubiquinone, an essential lipid-soluble electron transporter for aerobic cellular respiration. This is Ubiquinone biosynthesis protein COQ9, mitochondrial from Xenopus tropicalis (Western clawed frog).